Reading from the N-terminus, the 360-residue chain is Photosystem II protein D1 (360 aa).

The next 3 helical transmembrane spans lie at 29-46 (YVGW…TATT), 118-133 (HFLL…QWEL), and 142-156 (WICV…AATA). His-118 contributes to the chlorophyll a binding site. Residue Tyr-126 coordinates pheophytin a. Residues Asp-170 and Glu-189 each coordinate [CaMn4O5] cluster. The chain crosses the membrane as a helical span at residues 197-218 (FHMLGVAGVFGGSLFSAMHGSL). His-198 provides a ligand contact to chlorophyll a. A quinone is bound by residues His-215 and 264–265 (SF). His-215 is a binding site for Fe cation. Fe cation is bound at residue His-272. The helical transmembrane segment at 274–288 (FLGAWPVIGIWFTAM) threads the bilayer. [CaMn4O5] cluster-binding residues include His-332, Glu-333, Asp-342, and Ala-344. A propeptide spanning residues 345 to 360 (SGEQAPVALTAPAING) is cleaved from the precursor.

Belongs to the reaction center PufL/M/PsbA/D family. As to quaternary structure, PSII is composed of 1 copy each of membrane proteins PsbA, PsbB, PsbC, PsbD, PsbE, PsbF, PsbH, PsbI, PsbJ, PsbK, PsbL, PsbM, PsbT, PsbX, PsbY, PsbZ, Psb30/Ycf12, peripheral proteins PsbO, CyanoQ (PsbQ), PsbU, PsbV and a large number of cofactors. It forms dimeric complexes. Requires The D1/D2 heterodimer binds P680, chlorophylls that are the primary electron donor of PSII, and subsequent electron acceptors. It shares a non-heme iron and each subunit binds pheophytin, quinone, additional chlorophylls, carotenoids and lipids. D1 provides most of the ligands for the Mn4-Ca-O5 cluster of the oxygen-evolving complex (OEC). There is also a Cl(-1) ion associated with D1 and D2, which is required for oxygen evolution. The PSII complex binds additional chlorophylls, carotenoids and specific lipids. as cofactor. In terms of processing, tyr-161 forms a radical intermediate that is referred to as redox-active TyrZ, YZ or Y-Z. C-terminally processed by CtpA; processing is essential to allow assembly of the oxygen-evolving complex and thus photosynthetic growth.

It localises to the cellular thylakoid membrane. It catalyses the reaction 2 a plastoquinone + 4 hnu + 2 H2O = 2 a plastoquinol + O2. Its function is as follows. Photosystem II (PSII) is a light-driven water:plastoquinone oxidoreductase that uses light energy to abstract electrons from H(2)O, generating O(2) and a proton gradient subsequently used for ATP formation. It consists of a core antenna complex that captures photons, and an electron transfer chain that converts photonic excitation into a charge separation. The D1/D2 (PsbA/PsbD) reaction center heterodimer binds P680, the primary electron donor of PSII as well as several subsequent electron acceptors. This is Photosystem II protein D1 from Microcystis aeruginosa.